We begin with the raw amino-acid sequence, 307 residues long: Cytochrome c1 1, heme protein, mitochondrial (307 aa).

The N-terminal 64 residues, 1 to 64 (MVGGGVIQQI…LLSFSTVASA (64 aa)), are a transit peptide targeting the mitochondrion. Residues 65-270 (DEAEHGLESP…EPEMEERKLM (206 aa)) are Mitochondrial intermembrane-facing. A Cytochrome c domain is found at 90–246 (ASIRRGHQVY…YEDGVPATEA (157 aa)). Heme c contacts are provided by cysteine 103, cysteine 106, histidine 107, and methionine 226. The helical transmembrane segment at 271–288 (GFKWIFLLSLALLQAAYY) threads the bilayer. At 289 to 307 (RRLKWSVLKSRKLVLDVVN) the chain is on the mitochondrial matrix side.

This sequence belongs to the cytochrome c family. As to quaternary structure, component of the ubiquinol-cytochrome c oxidoreductase (cytochrome b-c1 complex, complex III, CIII), a multisubunit enzyme composed of 10 subunits. The complex is composed of 3 respiratory subunits cytochrome b (MT-CYB), cytochrome c1 (CYC1-1 or CYC1-2) and Rieske protein (UCR1-1 or UCR1-2), 2 core protein subunits MPPalpha1 (or MPPalpha2) and MPPB, and 5 low-molecular weight protein subunits QCR7-1 (or QCR7-2), UCRQ-1 (or UCRQ-2), QCR9, UCRY and probably QCR6-1 (or QCR6-2). The complex exists as an obligatory dimer and forms supercomplexes (SCs) in the inner mitochondrial membrane with NADH-ubiquinone oxidoreductase (complex I, CI), resulting in different assemblies (supercomplexes SCI(1)III(2) and SCI(2)III(4)). Binds 1 heme c group covalently per subunit.

Its subcellular location is the mitochondrion inner membrane. Its function is as follows. Component of the ubiquinol-cytochrome c oxidoreductase, a multisubunit transmembrane complex that is part of the mitochondrial electron transport chain which drives oxidative phosphorylation. The respiratory chain contains 3 multisubunit complexes succinate dehydrogenase (complex II, CII), ubiquinol-cytochrome c oxidoreductase (cytochrome b-c1 complex, complex III, CIII) and cytochrome c oxidase (complex IV, CIV), that cooperate to transfer electrons derived from NADH and succinate to molecular oxygen, creating an electrochemical gradient over the inner membrane that drives transmembrane transport and the ATP synthase. The cytochrome b-c1 complex catalyzes electron transfer from ubiquinol to cytochrome c, linking this redox reaction to translocation of protons across the mitochondrial inner membrane, with protons being carried across the membrane as hydrogens on the quinol. In the process called Q cycle, 2 protons are consumed from the matrix, 4 protons are released into the intermembrane space and 2 electrons are passed to cytochrome c. Cytochrome c1 is a catalytic core subunit containing a c-type heme. It transfers electrons from the [2Fe-2S] iron-sulfur cluster of the Rieske protein to cytochrome c. The protein is Cytochrome c1 1, heme protein, mitochondrial (CYC1-1) of Arabidopsis thaliana (Mouse-ear cress).